Reading from the N-terminus, the 299-residue chain is ATP phosphoribosyltransferase (299 aa).

This sequence belongs to the ATP phosphoribosyltransferase family. Long subfamily. Mg(2+) is required as a cofactor.

It localises to the cytoplasm. The catalysed reaction is 1-(5-phospho-beta-D-ribosyl)-ATP + diphosphate = 5-phospho-alpha-D-ribose 1-diphosphate + ATP. It participates in amino-acid biosynthesis; L-histidine biosynthesis; L-histidine from 5-phospho-alpha-D-ribose 1-diphosphate: step 1/9. With respect to regulation, feedback inhibited by histidine. Its function is as follows. Catalyzes the condensation of ATP and 5-phosphoribose 1-diphosphate to form N'-(5'-phosphoribosyl)-ATP (PR-ATP). Has a crucial role in the pathway because the rate of histidine biosynthesis seems to be controlled primarily by regulation of HisG enzymatic activity. This is ATP phosphoribosyltransferase from Shewanella baltica (strain OS155 / ATCC BAA-1091).